The primary structure comprises 57 residues: uncharacterized protein (57 aa).

This is an uncharacterized protein from Homo sapiens (Human).